The primary structure comprises 177 residues: Probable DNA-directed RNA polymerase subunit delta (177 aa).

The region spanning 14–81 (CSMIEVVHSV…GENRWGLRSW (68 aa)) is the HTH HARE-type domain. Positions 93–177 (PQPKPKKKRK…ETEEEEEEEL (85 aa)) are disordered. Residues 106 to 177 (DGFDDYIEED…ETEEEEEEEL (72 aa)) are compositionally biased toward acidic residues.

Belongs to the RpoE family. As to quaternary structure, RNAP is composed of a core of 2 alpha, a beta and a beta' subunits. The core is associated with a delta subunit and one of several sigma factors.

Functionally, participates in both the initiation and recycling phases of transcription. In the presence of the delta subunit, RNAP displays an increased specificity of transcription, a decreased affinity for nucleic acids, and an increased efficiency of RNA synthesis because of enhanced recycling. This is Probable DNA-directed RNA polymerase subunit delta from Bacillus cereus (strain AH187).